Consider the following 204-residue polypeptide: Prephenate decarboxylase (204 aa).

Belongs to the prephenate decarboxylase family.

It is found in the cytoplasm. It carries out the reaction prephenate + H(+) = 3-[(4R)-4-hydroxycyclohexa-1,5-dien-1-yl]-2-oxopropanoate + CO2. It participates in antibiotic biosynthesis; bacilysin biosynthesis. Part of the bacABCDEF operon responsible for the biosynthesis of the nonribosomally synthesized dipeptide antibiotic bacilysin, composed of L-alanine and L-anticapsin. Bacilysin is an irreversible inactivator of the glutaminase domain of glucosamine synthetase. BacA is an unusual prephenate decarboxylase that avoids the typical aromatization of the cyclohexadienol ring of prephenate. BacA catalyzes the protonation of prephenate (1-carboxy-4-hydroxy-alpha-oxo-2,5-cyclohexadiene-1-propanoic acid) at C6 position, followed by a decarboxylation to produce the endocyclic-delta(4),delta(8)-7R-dihydro-hydroxyphenylpyruvate (en-H2HPP). En-H2HPP is able to undergo a slow nonenzymatic isomerization to produce the exocyclic-delta(3),delta(5)-dihydro-hydroxyphenylpyruvate (ex-H2HPP). BacA isomerizes only the pro-R double bond in prephenate. The chain is Prephenate decarboxylase from Bacillus subtilis.